We begin with the raw amino-acid sequence, 118 residues long: Ig heavy chain V region AC38 205.12 (118 aa).

A v segment region spans residues 1–98; that stretch reads EVQLQQSGPE…EDSAVYYCAR (98 aa). C22 and C96 are oxidised to a cystine. The tract at residues 99-104 is d segment; sequence GYGYDP. The interval 105 to 118 is j segment; the sequence is FDVWGTGTTVTVSS.

The polypeptide is Ig heavy chain V region AC38 205.12 (Mus musculus (Mouse)).